The following is a 314-amino-acid chain: Ferredoxin:CoB-CoM heterodisulfide reductase subunit B (314 aa).

This sequence belongs to the HdrB family. The ferredoxin:CoB-CoM heterodisulfide reductase is composed of three subunits; HdrA1, HdrB1 and HdrC1. [4Fe-4S] cluster serves as cofactor.

The protein resides in the cytoplasm. It catalyses the reaction coenzyme B + coenzyme M + 2 oxidized [2Fe-2S]-[ferredoxin] = coenzyme M-coenzyme B heterodisulfide + 2 reduced [2Fe-2S]-[ferredoxin] + 2 H(+). It participates in cofactor metabolism; coenzyme M-coenzyme B heterodisulfide reduction; coenzyme B and coenzyme M from coenzyme M-coenzyme B heterodisulfide: step 1/1. Functionally, part of a complex that catalyzes the reversible reduction of CoM-S-S-CoB to the thiol-coenzymes H-S-CoM (coenzyme M) and H-S-CoB (coenzyme B). Probably involved in methylotrophic methanogenesis but not in aceticlastic methanogenesis. This chain is Ferredoxin:CoB-CoM heterodisulfide reductase subunit B, found in Methanosarcina acetivorans (strain ATCC 35395 / DSM 2834 / JCM 12185 / C2A).